Reading from the N-terminus, the 185-residue chain is Ribosome-recycling factor (185 aa).

This sequence belongs to the RRF family.

The protein localises to the cytoplasm. Its function is as follows. Responsible for the release of ribosomes from messenger RNA at the termination of protein biosynthesis. May increase the efficiency of translation by recycling ribosomes from one round of translation to another. This is Ribosome-recycling factor from Dichelobacter nodosus (strain VCS1703A).